A 341-amino-acid polypeptide reads, in one-letter code: S-adenosylmethionine:tRNA ribosyltransferase-isomerase (341 aa).

This sequence belongs to the QueA family. In terms of assembly, monomer.

Its subcellular location is the cytoplasm. The catalysed reaction is 7-aminomethyl-7-carbaguanosine(34) in tRNA + S-adenosyl-L-methionine = epoxyqueuosine(34) in tRNA + adenine + L-methionine + 2 H(+). It participates in tRNA modification; tRNA-queuosine biosynthesis. In terms of biological role, transfers and isomerizes the ribose moiety from AdoMet to the 7-aminomethyl group of 7-deazaguanine (preQ1-tRNA) to give epoxyqueuosine (oQ-tRNA). The polypeptide is S-adenosylmethionine:tRNA ribosyltransferase-isomerase (Staphylococcus epidermidis (strain ATCC 12228 / FDA PCI 1200)).